Here is a 479-residue protein sequence, read N- to C-terminus: Lysosomal protective protein (479 aa).

Residues 1 to 27 (MFRAALWPPVLLLLQLLLLACAPGGEG) form the signal peptide. 4 disulfides stabilise this stretch: Cys87/Cys361, Cys239/Cys255, Cys240/Cys245, and Cys280/Cys330. N-linked (GlcNAc...) asparagine glycosylation is present at Asn144. Ser177 is an active-site residue. N-linked (GlcNAc...) asparagine glycosylation is present at Asn332. Catalysis depends on residues Asp399 and His456.

The protein belongs to the peptidase S10 family. As to quaternary structure, heterodimer of a 32 kDa chain and a 20 kDa chain; disulfide-linked.

Its subcellular location is the lysosome. The catalysed reaction is Release of a C-terminal amino acid with broad specificity.. Its function is as follows. Protective protein appears to be essential for both the activity of beta-galactosidase and neuraminidase, it associates with these enzymes and exerts a protective function necessary for their stability and activity. This protein is also a carboxypeptidase and can deamidate tachykinins. This chain is Lysosomal protective protein (CTSA), found in Bos taurus (Bovine).